The sequence spans 308 residues: MAEYQNIFSQVQVRGPADLGMTEDVNLANRSGVGPFSTLLGWFGNAQLGPIYLGSLGVLSLFSGLMWFFTIGIWFWYQAGWNPAVFLRDLFFFSLEPPAPEYGLSFAAPLKEGGLWLIASFFMFVAVWSWWGRTYLRAQALGMGKHTAWAFLSAIWLWMVLGFIRPILMGSWSEAVPYGIFSHLDWTNNFSLVHGNLFYNPFHGLSIAFLYGSALLFAMHGATILAVSRFGGERELEQIADRGTAAERAALFWRWTMGFNATMEGIHRWAIWMAVLVTLTGGIGILLSGTVVDNWYVWGQNHGMAPLN.

The next 3 membrane-spanning stretches (helical) occupy residues 54-80, 111-140, and 143-168; these read GSLGVLSLFSGLMWFFTIGIWFWYQAG, KEGGLWLIASFFMFVAVWSWWGRTYLRAQA, and MGKHTAWAFLSAIWLWMVLGFIRPIL. Positions 183 and 203 each coordinate (7R,8Z)-bacteriochlorophyll b. A helical membrane pass occupies residues 198–226; the sequence is FYNPFHGLSIAFLYGSALLFAMHGATILA. Fe cation contacts are provided by His220 and Glu235. Trp253 lines the a ubiquinone pocket. A helical transmembrane segment spans residues 260 to 286; sequence NATMEGIHRWAIWMAVLVTLTGGIGIL. His267 provides a ligand contact to Fe cation.

This sequence belongs to the reaction center PufL/M/PsbA/D family. Reaction center is composed of four bacteriochlorophylls, two bacteriopheophytins, two ubiquinones, one iron, and three highly hydrophobic polypeptide chains (designated L, M, and H).

Its subcellular location is the cellular chromatophore membrane. Its function is as follows. The reaction center is a membrane-bound complex that mediates the initial photochemical event in the electron transfer process of photosynthesis. The sequence is that of Reaction center protein M chain (pufM) from Cereibacter sphaeroides (strain ATCC 17023 / DSM 158 / JCM 6121 / CCUG 31486 / LMG 2827 / NBRC 12203 / NCIMB 8253 / ATH 2.4.1.) (Rhodobacter sphaeroides).